We begin with the raw amino-acid sequence, 95 residues long: Aspartyl/glutamyl-tRNA(Asn/Gln) amidotransferase subunit C (95 aa).

It belongs to the GatC family. As to quaternary structure, heterotrimer of A, B and C subunits.

It carries out the reaction L-glutamyl-tRNA(Gln) + L-glutamine + ATP + H2O = L-glutaminyl-tRNA(Gln) + L-glutamate + ADP + phosphate + H(+). The enzyme catalyses L-aspartyl-tRNA(Asn) + L-glutamine + ATP + H2O = L-asparaginyl-tRNA(Asn) + L-glutamate + ADP + phosphate + 2 H(+). Its function is as follows. Allows the formation of correctly charged Asn-tRNA(Asn) or Gln-tRNA(Gln) through the transamidation of misacylated Asp-tRNA(Asn) or Glu-tRNA(Gln) in organisms which lack either or both of asparaginyl-tRNA or glutaminyl-tRNA synthetases. The reaction takes place in the presence of glutamine and ATP through an activated phospho-Asp-tRNA(Asn) or phospho-Glu-tRNA(Gln). The polypeptide is Aspartyl/glutamyl-tRNA(Asn/Gln) amidotransferase subunit C (Geobacter sp. (strain M21)).